The sequence spans 378 residues: Fructose-1,6-bisphosphatase class 1 2 (378 aa).

The Mg(2+) site is built by Glu-98, Asp-120, Leu-122, and Asp-123. Substrate-binding positions include 123–126 (DGSS) and Asn-227. Glu-299 contacts Mg(2+).

It belongs to the FBPase class 1 family. As to quaternary structure, homotetramer. The cofactor is Mg(2+).

Its subcellular location is the cytoplasm. The enzyme catalyses beta-D-fructose 1,6-bisphosphate + H2O = beta-D-fructose 6-phosphate + phosphate. The protein operates within carbohydrate biosynthesis; gluconeogenesis. This Paraburkholderia xenovorans (strain LB400) protein is Fructose-1,6-bisphosphatase class 1 2.